The primary structure comprises 894 residues: Glutamate receptor 3 (894 aa).

The first 28 residues, 1–28, serve as a signal peptide directing secretion; that stretch reads MARQKKMGQSVLRAVFFLVLGLLGHSHG. Topologically, residues 29–552 are extracellular; sequence GFPNTISIGG…GVFSFLDPLA (524 aa). Residues Asn-63, Asn-266, Asn-380, Asn-415, and Asn-422 are each glycosylated (N-linked (GlcNAc...) asparagine). A disulfide bond links Cys-91 and Cys-340. Positions 508, 510, and 515 each coordinate L-glutamate. The chain crosses the membrane as a helical span at residues 553 to 573; that stretch reads YEIWMCIVFAYIGVSVVLFLV. Over 574–602 the chain is Cytoplasmic; it reads SRFSPYEWHLEDNNEEPRDPQSPPDPPNE. The segment at residues 603 to 618 is an intramembrane region (helical; Pore-forming); sequence FGIFNSLWFSLGAFMQ. Residues 619 to 621 lie within the membrane without spanning it; the sequence is QGC. Residue Cys-621 is the site of S-palmitoyl cysteine attachment. The Cytoplasmic portion of the chain corresponds to 622-627; the sequence is DISPRS. The helical transmembrane segment at 628–648 threads the bilayer; it reads LSGRIVGGVWWFFTLIIISSY. The Extracellular portion of the chain corresponds to 649 to 823; that stretch reads TANLAAFLTV…DKTSALSLSN (175 aa). Residues Ser-686, Thr-687, and Glu-737 each contribute to the L-glutamate site. Cys-750 and Cys-805 form a disulfide bridge. Residues 824–844 traverse the membrane as a helical segment; the sequence is VAGVFYILVGGLGLAMMVALI. Residues 845–894 are Cytoplasmic-facing; sequence EFCYKSRAESKRMKLTKNTQNFKPAPATNTQNYATYREGYNVYGTESVKI. Cys-847 carries S-palmitoyl cysteine lipidation. A phosphotyrosine mark is found at Tyr-877 and Tyr-887.

It belongs to the glutamate-gated ion channel (TC 1.A.10.1) family. GRIA3 subfamily. In terms of assembly, homotetramer or heterotetramer of pore-forming glutamate receptor subunits. Tetramers may be formed by the dimerization of dimers. Interacts with PICK1, GRIP1 and GRIP2. Found in a complex with GRIA1, GRIA2, GRIA4, CNIH2, CNIH3, CACNG2, CACNG3, CACNG4, CACNG5, CACNG7 and CACNG8. Interacts with CACNG5. Found in a complex with GRIA1, GRIA2, GRIA4, DLG4, CACNG8 and CNIH2.

It localises to the cell membrane. It is found in the postsynaptic cell membrane. The protein localises to the postsynaptic density membrane. It catalyses the reaction Ca(2+)(in) = Ca(2+)(out). Functionally, ionotropic glutamate receptor that functions as a ligand-gated cation channel, gated by L-glutamate and glutamatergic agonists such as alpha-amino-3-hydroxy-5-methyl-4-isoxazolepropionic acid (AMPA), quisqualic acid, and kainic acid. L-glutamate acts as an excitatory neurotransmitter at many synapses in the central nervous system and plays an important role in fast excitatory synaptic transmission by inducing long-term potentiation. Binding of the excitatory neurotransmitter L-glutamate induces a conformation change, leading to the opening of the cation channel, and thereby converts the chemical signal to an electrical impulse upon entry of calcium. The receptor then desensitizes rapidly and enters a transient inactive state, characterized by the presence of bound agonist. In the presence of CACNG8, shows resensitization which is characterized by a delayed accumulation of current flux upon continued application of glutamate. The chain is Glutamate receptor 3 from Homo sapiens (Human).